The sequence spans 115 residues: Methylmalonyl-CoA decarboxylase subunit delta (115 aa).

A helical membrane pass occupies residues 11–31; sequence WLIMAINMTVVFAVLIALGIL. The segment at 46–70 is disordered; sequence EAPAATAPVATPTATPVAPANASAQ. Residues 48–65 are compositionally biased toward low complexity; it reads PAATAPVATPTATPVAPA.

This sequence belongs to the OadG family. In terms of assembly, the methylmalonyl-CoA decarboxylase is composed of five subunits: the carboxyltransferase alpha subunit (MmdA), the tunnel beta subunit (MmdB), the biotin-containing gamma subunit (MmdC), and the delta (MmdD) and epsilon (MmdE) subunits. The N-terminus is blocked.

It localises to the cell membrane. The catalysed reaction is (S)-methylmalonyl-CoA + Na(+)(in) + H(+)(out) = propanoyl-CoA + Na(+)(out) + CO2. With respect to regulation, completely inhibited by avidin. Subunit of the sodium ion pump methylmalonyl-CoA decarboxylase, which converts the chemical energy of a decarboxylation reaction into an electrochemical gradient of Na(+) ions across the cytoplasmic membrane, thereby creating a sodium ion motive force that is used for ATP synthesis. The delta subunit is required for catalytic activity as well as for the proper assembly of the individual subunits to an enzyme complex. Can also convert malonyl-CoA into acetyl-CoA. The sequence is that of Methylmalonyl-CoA decarboxylase subunit delta from Veillonella parvula (Staphylococcus parvulus).